Reading from the N-terminus, the 197-residue chain is DnaJ homolog subfamily C member 5 (197 aa).

Positions 13 to 82 (GESLYHVLGL…RNIYDKYGSL (70 aa)) constitute a J domain. A disordered region spans residues 153 to 197 (EDLEAQMQSDERDTEGPVLVQPASATETTQLTSDSHASYHTDGFN). Positions 175–197 (ASATETTQLTSDSHASYHTDGFN) are enriched in polar residues.

Post-translationally, palmitoylated. Palmitoylation occurs probably in the cysteine-rich domain and regulates DNAJC5 stable membrane attachment.

Its subcellular location is the cytoplasm. The protein resides in the cytosol. It localises to the membrane. It is found in the cytoplasmic vesicle. The protein localises to the secretory vesicle. Its subcellular location is the chromaffin granule membrane. The protein resides in the melanosome. It localises to the cell membrane. Its function is as follows. May have an important role in presynaptic function. May be involved in calcium-dependent neurotransmitter release at nerve endings. The protein is DnaJ homolog subfamily C member 5 of Xenopus laevis (African clawed frog).